We begin with the raw amino-acid sequence, 430 residues long: MRITTPVNPDGVQFPVWDRPDRFFFAPERHERHDLSRPGFFIRAEGIMTDIGRMAHVVPARTQLPVSAYFDEARFAREQELIFKQSSLYVGHQKLVPELGDWRTLVQEDGGRALVRNQRGVELVSNVCRHRQALMLGGEAGNVSGNANTRGSLKDTGGNIVCPLHRWTYNDRGELLGAPQFDATPCMNLQRFRLRDCHGLLFEGPRDPAADMAPLFARPEFDFGDYVLDHVEVHQCNYNWKTFIEVYLEDYHVGPFHPGLGRFVTCDDLAWEFNDWYSLQRVGVHQALAQPGSAVYKQWHDRLLDFRAGQAPDFGAMWVTYFPTHMIELYPHVLVLSTLYPKSPQETLNVVEFYYPEEIVAFEREFVEAQRAAYMETAIEDDEIAERMDAGRKALMLRGANETGPYQSPMEDGMQHFHEWYRRVMGETED.

The region spanning 88–203 (LYVGHQKLVP…LRDCHGLLFE (116 aa)) is the Rieske domain. 4 residues coordinate [2Fe-2S] cluster: Cys-128, His-130, Cys-162, and His-165.

It belongs to the bacterial ring-hydroxylating dioxygenase alpha subunit family. [2Fe-2S] cluster is required as a cofactor.

Its function is as follows. Rieske-type iron sulfur protein that can catalyze in vitro the 2-hydroxylation of putrescine, forming 2-hydroxyputrescine. May be involved in the biosynthesis of the cyclic hydroxamate siderophore alcaligin. In Bordetella bronchiseptica (strain ATCC BAA-588 / NCTC 13252 / RB50) (Alcaligenes bronchisepticus), this protein is Putrescine 2-hydroxylase.